A 169-amino-acid polypeptide reads, in one-letter code: Peptide deformylase (169 aa).

Fe cation-binding residues include C92 and H134. E135 is an active-site residue. Fe cation is bound at residue H138.

It belongs to the polypeptide deformylase family. The cofactor is Fe(2+).

The catalysed reaction is N-terminal N-formyl-L-methionyl-[peptide] + H2O = N-terminal L-methionyl-[peptide] + formate. Its function is as follows. Removes the formyl group from the N-terminal Met of newly synthesized proteins. Requires at least a dipeptide for an efficient rate of reaction. N-terminal L-methionine is a prerequisite for activity but the enzyme has broad specificity at other positions. The chain is Peptide deformylase from Cellvibrio japonicus (strain Ueda107) (Pseudomonas fluorescens subsp. cellulosa).